The primary structure comprises 346 residues: S-adenosylmethionine:tRNA ribosyltransferase-isomerase (346 aa).

The protein belongs to the QueA family. Monomer.

It is found in the cytoplasm. It catalyses the reaction 7-aminomethyl-7-carbaguanosine(34) in tRNA + S-adenosyl-L-methionine = epoxyqueuosine(34) in tRNA + adenine + L-methionine + 2 H(+). Its pathway is tRNA modification; tRNA-queuosine biosynthesis. In terms of biological role, transfers and isomerizes the ribose moiety from AdoMet to the 7-aminomethyl group of 7-deazaguanine (preQ1-tRNA) to give epoxyqueuosine (oQ-tRNA). This chain is S-adenosylmethionine:tRNA ribosyltransferase-isomerase, found in Cereibacter sphaeroides (strain KD131 / KCTC 12085) (Rhodobacter sphaeroides).